The primary structure comprises 496 residues: Aldehyde dehydrogenase 1A1 (496 aa).

Residues Lys86 and Lys123 each carry the N6-acetyllysine modification. NAD(+)-binding positions include 162 to 165, 188 to 191, 221 to 222, and 241 to 242; these read IPWN, KPAE, GP, and GS. Lys247 bears the N6-acetyllysine mark. Glu264 (proton acceptor) is an active-site residue. Position 264 to 266 (264 to 266) interacts with NAD(+); the sequence is ELG. Catalysis depends on Cys298, which acts as the Nucleophile. Residues 331 to 496 form a mediates interaction with PRMT3 region; that stretch reads LAPEVNQGPQ…VTVKISQKNS (166 aa). 344-348 contributes to the NAD(+) binding site; it reads EQYNK. Lys348 and Lys362 each carry N6-acetyllysine. 395–397 lines the NAD(+) pocket; the sequence is EIF. At Lys405 the chain carries N6-acetyllysine. Residue Ser408 is modified to Phosphoserine. Lys414, Lys430, and Lys490 each carry N6-acetyllysine.

This sequence belongs to the aldehyde dehydrogenase family. As to quaternary structure, homotetramer. Interacts with PRMT3; the interaction is direct, inhibits ALDH1A1 aldehyde dehydrogenase activity and is independent of the methyltransferase activity of PRMT3. Post-translationally, the N-terminus is blocked most probably by acetylation.

The protein resides in the cytoplasm. It localises to the cytosol. It is found in the cell projection. Its subcellular location is the axon. It carries out the reaction an aldehyde + NAD(+) + H2O = a carboxylate + NADH + 2 H(+). It catalyses the reaction all-trans-retinal + NAD(+) + H2O = all-trans-retinoate + NADH + 2 H(+). The enzyme catalyses 9-cis-retinal + NAD(+) + H2O = 9-cis-retinoate + NADH + 2 H(+). The catalysed reaction is 11-cis-retinal + NAD(+) + H2O = 11-cis-retinoate + NADH + 2 H(+). It carries out the reaction 13-cis-retinal + NAD(+) + H2O = 13-cis-retinoate + NADH + 2 H(+). It catalyses the reaction (E)-4-hydroxynon-2-enal + NAD(+) + H2O = (E)-4-hydroxynon-2-enoate + NADH + 2 H(+). The enzyme catalyses malonaldehyde + NAD(+) + H2O = 3-oxopropanoate + NADH + 2 H(+). The catalysed reaction is hexanal + NAD(+) + H2O = hexanoate + NADH + 2 H(+). It carries out the reaction propanal + NAD(+) + H2O = propanoate + NADH + 2 H(+). It catalyses the reaction 3-deoxyglucosone + NAD(+) + H2O = 2-dehydro-3-deoxy-D-gluconate + NADH + 2 H(+). The enzyme catalyses acetaldehyde + NAD(+) + H2O = acetate + NADH + 2 H(+). The catalysed reaction is benzaldehyde + NAD(+) + H2O = benzoate + NADH + 2 H(+). It carries out the reaction 4-aminobutanal + NAD(+) + H2O = 4-aminobutanoate + NADH + 2 H(+). The protein operates within cofactor metabolism; retinol metabolism. Functionally, cytosolic dehydrogenase that catalyzes the irreversible oxidation of a wide range of aldehydes to their corresponding carboxylic acid. Functions downstream of retinol dehydrogenases and catalyzes the oxidation of retinaldehyde into retinoic acid, the second step in the oxidation of retinol/vitamin A into retinoic acid. This pathway is crucial to control the levels of retinol and retinoic acid, two important molecules which excess can be teratogenic and cytotoxic. Also oxidizes aldehydes resulting from lipid peroxidation like (E)-4-hydroxynon-2-enal/HNE, malonaldehyde and hexanal that form protein adducts and are highly cytotoxic. By participating for instance to the clearance of (E)-4-hydroxynon-2-enal/HNE in the lens epithelium prevents the formation of HNE-protein adducts and lens opacification. Functions also downstream of fructosamine-3-kinase in the fructosamine degradation pathway by catalyzing the oxidation of 3-deoxyglucosone, the carbohydrate product of fructosamine 3-phosphate decomposition, which is itself a potent glycating agent that may react with lysine and arginine side-chains of proteins. Also has an aminobutyraldehyde dehydrogenase activity and is probably part of an alternative pathway for the biosynthesis of GABA/4-aminobutanoate in midbrain, thereby playing a role in GABAergic synaptic transmission. The chain is Aldehyde dehydrogenase 1A1 from Oryctolagus cuniculus (Rabbit).